Here is a 439-residue protein sequence, read N- to C-terminus: Coiled-coil domain-containing protein 166 (439 aa).

Residues M1 to S28 are disordered. The segment covering P9 to A23 has biased composition (low complexity). Coiled-coil stretches lie at residues L27 to R74 and D121 to L213. A disordered region spans residues P276–A439. Polar residues predominate over residues V338–R365. Low complexity-rich tracts occupy residues S376–S392 and A428–A439.

The polypeptide is Coiled-coil domain-containing protein 166 (CCDC166) (Homo sapiens (Human)).